Consider the following 531-residue polypeptide: Keratin, type II cytoskeletal 79 (531 aa).

Over residues 1-12 (MRSSLSRQTFST) the composition is skewed to polar residues. The segment at 1–55 (MRSSLSRQTFSTKGGFSSNSASGGGGSRMRTSYSSVTMSRGSGGGGGVRSGSSSG) is disordered. The segment at 1 to 138 (MRSSLSRQTF…DPEIQRVRTQ (138 aa)) is head. The segment covering 28–40 (RMRTSYSSVTMSR) has biased composition (low complexity). A compositionally biased stretch (gly residues) spans 41 to 55 (GSGGGGGVRSGSSSG). Residues 139-174 (EREQIKTLNNKFASFIDKVRFLEQQNKVLETKWALL) form a coil 1A region. The region spanning 139–453 (EREQIKTLNN…KLLESEESRM (315 aa)) is the IF rod domain. The tract at residues 175-194 (QEQSQNTGVARSLEPFFENY) is linker 1. Residues 195–286 (LSTLRRQLDT…QLFEMELSQV (92 aa)) form a coil 1B region. Residues 287–310 (QTNVSDTNVILSMDNNRNLDLDSI) form a linker 12 region. Positions 311-449 (IAEVKAQYEL…ATYRKLLESE (139 aa)) are coil 2. The tract at residues 450–531 (ESRMSGDCPS…TTVKTSSRRY (82 aa)) is tail.

Belongs to the intermediate filament family. Heterotetramer of two type I and two type II keratins.

This is Keratin, type II cytoskeletal 79 (Krt79) from Mus musculus (Mouse).